A 371-amino-acid polypeptide reads, in one-letter code: Glycerate kinase (371 aa).

It belongs to the glycerate kinase type-1 family.

The enzyme catalyses (R)-glycerate + ATP = (2R)-3-phosphoglycerate + ADP + H(+). This chain is Glycerate kinase (glxK), found in Neisseria meningitidis serogroup B (strain ATCC BAA-335 / MC58).